A 97-amino-acid polypeptide reads, in one-letter code: Aspartyl/glutamyl-tRNA(Asn/Gln) amidotransferase subunit C (97 aa).

Belongs to the GatC family. In terms of assembly, heterotrimer of A, B and C subunits.

The enzyme catalyses L-glutamyl-tRNA(Gln) + L-glutamine + ATP + H2O = L-glutaminyl-tRNA(Gln) + L-glutamate + ADP + phosphate + H(+). It carries out the reaction L-aspartyl-tRNA(Asn) + L-glutamine + ATP + H2O = L-asparaginyl-tRNA(Asn) + L-glutamate + ADP + phosphate + 2 H(+). Allows the formation of correctly charged Asn-tRNA(Asn) or Gln-tRNA(Gln) through the transamidation of misacylated Asp-tRNA(Asn) or Glu-tRNA(Gln) in organisms which lack either or both of asparaginyl-tRNA or glutaminyl-tRNA synthetases. The reaction takes place in the presence of glutamine and ATP through an activated phospho-Asp-tRNA(Asn) or phospho-Glu-tRNA(Gln). This Anaeromyxobacter dehalogenans (strain 2CP-C) protein is Aspartyl/glutamyl-tRNA(Asn/Gln) amidotransferase subunit C.